Consider the following 383-residue polypeptide: L-lactate dehydrogenase (383 aa).

The region spanning 1–380 is the FMN hydroxy acid dehydrogenase domain; sequence MIISSGNDYR…NTDCLVQAIK (380 aa). Y24 contributes to the substrate binding site. Residues S106 and Q127 each coordinate FMN. Y129 is a binding site for substrate. T155 is a binding site for FMN. R164 contributes to the substrate binding site. FMN is bound at residue K251. The active-site Proton acceptor is the H275. R278 provides a ligand contact to substrate. 306–330 provides a ligand contact to FMN; it reads DSGIRNGLDVVRMLALGADTVLLGR.

This sequence belongs to the FMN-dependent alpha-hydroxy acid dehydrogenase family. Requires FMN as cofactor.

It localises to the cell inner membrane. It carries out the reaction (S)-lactate + A = pyruvate + AH2. In terms of biological role, catalyzes the conversion of L-lactate to pyruvate. Is coupled to the respiratory chain. In Acinetobacter baumannii (strain SDF), this protein is L-lactate dehydrogenase.